We begin with the raw amino-acid sequence, 1036 residues long: Mediator of RNA polymerase II transcription subunit 24 (1036 aa).

Belongs to the Mediator complex subunit 24 family. Component of the Mediator complex.

The protein localises to the nucleus. Component of the Mediator complex, a coactivator involved in the regulated transcription of nearly all RNA polymerase II-dependent genes. Mediator functions as a bridge to convey information from gene-specific regulatory proteins to the basal RNA polymerase II transcription machinery. Mediator is recruited to promoters by direct interactions with regulatory proteins and serves as a scaffold for the assembly of a functional preinitiation complex with RNA polymerase II and the general transcription factors. This chain is Mediator of RNA polymerase II transcription subunit 24 (MED24), found in Anopheles gambiae (African malaria mosquito).